The primary structure comprises 271 residues: Short chain dehydrogenase virK (271 aa).

The NADP(+) site is built by leucine 13, aspartate 59, asparagine 87, tyrosine 168, lysine 172, valine 201, and threonine 203. Tyrosine 168 serves as the catalytic Proton donor. The active-site Lowers pKa of active site Tyr is lysine 172.

The protein belongs to the short-chain dehydrogenases/reductases (SDR) family.

It functions in the pathway secondary metabolite biosynthesis. In terms of biological role, short chain dehydrogenase; part of the gene cluster that mediates the biosynthesis of virensols and trichoxide, fungal natural products that contain or are derived from a salicylaldehyde core. The pathway begins with the synthesis of the reduced chain in virensol C by the highly reducing polyketide synthase virA via condensation of one acetate and 8 malonate units. VirA has interesting programming rules since the first 2 ketides are fully reduced, the 3 following ketides undergo beta-dehydration, and the last 3 ketides are only reduced to beta-hydroxys to yield the trihydroxy portion. The production of aldehyde virensol C by virA alone is surprising, since virA does not contain a reductase (R) domain that is typically associated with reductive product release in HRPKS. The cupin-domain enzyme virC is involved in enhancing virA product turnover. The short-chain dehydrogenase virB then oxidizes the C-7 alcohol of virensol C to a ketone, yielding virensol D. Virensol D is further transformed to salicylaldehyde 5-deoxyaurocitrin by the short-chain dehydrogenase virD. VirD catalyzes the dehydrogenation of C-3 to form the beta-ketone aldehyde, which is followed by the generation of the nucleophilic C-2 that is required for the intramolecular aldol condensation between C-2 and C-7, itself followed by dehydration and aromatization which leads to salicylaldehyde 5-deoxyaurocitrin. While the dehydrogenation of virensol D is definitely catalyzed by virD, the aldol condensation and dehydration may be uncatalyzed or assisted by virD. The short chain dehydrogenase virG then converts salicylaldehyde 5-deoxyaurocitrin into virensol B which is further hydroxylated by the cytochrome P450 monooxygenase virE to yield the hydroquinone virensol A. VirI then may oxidize virensol A to form the quinone, while virH performs the epoxidation. Finally, the two remaining short-chain dehydrogenases, virK and virL, are probably responsible for reducing the ketones to the corresponding alcohols to furnish the epoxycyclohexanol structure in trichoxide. This chain is Short chain dehydrogenase virK, found in Hypocrea virens (strain Gv29-8 / FGSC 10586) (Gliocladium virens).